The following is a 490-amino-acid chain: COP9 signalosome complex subunit 2 (490 aa).

The span at 1–30 (MSDDDFMQDSDQEYDFEYEDDEEEDTGDVD) shows a compositional bias: acidic residues. A disordered region spans residues 1–32 (MSDDDFMQDSDQEYDFEYEDDEEEDTGDVDIE). Residues 250-418 (SEENWKEAQS…GVLELESRED (169 aa)) form the PCI domain. Positions 469 to 490 (DTMRSMGSGKRGRRVGLTQRAY) are disordered.

It belongs to the CSN2 family. Component of the COP9 signalosome (CSN) complex.

The protein localises to the cytoplasm. It is found in the nucleus. Functionally, component of the COP9 signalosome (CSN) complex that acts as an regulator of the ubiquitin (Ubl) conjugation pathway by mediating the deneddylation of the cullin subunit of SCF-type E3 ubiquitin-protein ligase complexes. The CSN complex is involved in the regulation of the circadian clock through its control of the stability of the SCF(FWD-1) complex. This Neurospora crassa (strain ATCC 24698 / 74-OR23-1A / CBS 708.71 / DSM 1257 / FGSC 987) protein is COP9 signalosome complex subunit 2 (csn-2).